A 446-amino-acid chain; its full sequence is Histidine--tRNA ligase (446 aa).

The protein belongs to the class-II aminoacyl-tRNA synthetase family. As to quaternary structure, homodimer.

It is found in the cytoplasm. The catalysed reaction is tRNA(His) + L-histidine + ATP = L-histidyl-tRNA(His) + AMP + diphosphate + H(+). In Burkholderia lata (strain ATCC 17760 / DSM 23089 / LMG 22485 / NCIMB 9086 / R18194 / 383), this protein is Histidine--tRNA ligase.